We begin with the raw amino-acid sequence, 313 residues long: RHOMBOID-like protein 7 (313 aa).

The span at 1-11 (MLSTAAEEDPE) shows a compositional bias: acidic residues. Residues 1–24 (MLSTAAEEDPEGGSRETNNGGETT) are disordered. Polar residues predominate over residues 15 to 24 (RETNNGGETT). A run of 7 helical transmembrane segments spans residues 31-51 (SWII…VMYY), 112-132 (WLHA…YIGV), 143-163 (VGTI…LFLE), 166-186 (ISVG…SELL), 196-216 (GVAI…GTLP), 221-241 (FAHI…LIHP), and 269-289 (LCIV…VILF). The active-site Nucleophile is the Ser-171. His-223 functions as the Charge relay system in the catalytic mechanism.

This sequence belongs to the peptidase S54 family.

It is found in the membrane. It catalyses the reaction Cleaves type-1 transmembrane domains using a catalytic dyad composed of serine and histidine that are contributed by different transmembrane domains.. Probable rhomboid-type serine protease that catalyzes intramembrane proteolysis. May function in embryo development. This is RHOMBOID-like protein 7 from Arabidopsis thaliana (Mouse-ear cress).